Consider the following 390-residue polypeptide: Transforming protein cbl (390 aa).

The interval 1-52 (ASAGGGCRRGPSFSPGSIPSLAAERAPDPPLAMAGNVKKSSGAGGGGSGGSG) is disordered. Over residues 42–52 (GAGGGGSGGSG) the composition is skewed to gly residues. The segment at 77 to 205 (PPCTVDKKMV…KGIFPSGLFQ (129 aa)) is 4H. In terms of domain architecture, Cbl-PTB spans 77–381 (PPCTVDKKMV…GRNQNPDLTG (305 aa)). The segment at 206–278 (GDTFRITKAD…FEFDIFTRLF (73 aa)) is EF-hand-like. Residues D259, T261, N263, Y265, and E270 each coordinate Ca(2+). The segment at 279–381 (QPWSSLLRNW…GRNQNPDLTG (103 aa)) is SH2-like. Position 324 (R324) interacts with 4-O-phospho-L-tyrosine.

In terms of biological role, induces early B-lineage lymphomas. This Mus musculus (Mouse) protein is Transforming protein cbl (V-CBL).